The primary structure comprises 183 residues: Large ribosomal subunit protein uL5 (183 aa).

This sequence belongs to the universal ribosomal protein uL5 family. Part of the 50S ribosomal subunit; part of the 5S rRNA/L5/L18/L25 subcomplex. Contacts the 5S rRNA and the P site tRNA. Forms a bridge to the 30S subunit in the 70S ribosome.

This is one of the proteins that bind and probably mediate the attachment of the 5S RNA into the large ribosomal subunit, where it forms part of the central protuberance. In the 70S ribosome it contacts protein S13 of the 30S subunit (bridge B1b), connecting the 2 subunits; this bridge is implicated in subunit movement. Contacts the P site tRNA; the 5S rRNA and some of its associated proteins might help stabilize positioning of ribosome-bound tRNAs. This is Large ribosomal subunit protein uL5 from Flavobacterium johnsoniae (strain ATCC 17061 / DSM 2064 / JCM 8514 / BCRC 14874 / CCUG 350202 / NBRC 14942 / NCIMB 11054 / UW101) (Cytophaga johnsonae).